The sequence spans 84 residues: Delta-conotoxin-like Bt6.4 (84 aa).

An N-terminal signal peptide occupies residues 1–22 (MKLTCMVIVAVLFLTAWTSVMA). A propeptide spanning residues 23-57 (DGSINRPDIAEGWQKFFSKARDEMKNRAASELNKR) is cleaved from the precursor. 3 disulfides stabilise this stretch: C58–C74, C65–C78, and C73–C82.

This sequence belongs to the conotoxin O1 superfamily. In terms of tissue distribution, expressed by the venom duct.

The protein localises to the secreted. In terms of biological role, this toxin activates voltage-gated sodium channels. It shifts the voltage-dependence of activation to more hyperpolarized potentials but has only little effect on channel inactivation. It is active on Nav1.3/SCN3A (EC(50)=3.98 nM), Nav1.4/SCN4A (EC(50)=4.99 nM), Nav1.6/SCN8A (EC(50)=1.27 nM) and Nav1.7/SCN9A (EC(50)=2.42 nM) voltage-gated sodium channels. In vivo, it induces nocifensive or pain-like behaviors in mice when injected intraplantarly. The polypeptide is Delta-conotoxin-like Bt6.4 (Conus betulinus (Beech cone)).